The primary structure comprises 806 residues: NADH:(hydroxy)cinnamate reductase subunit CrdB (806 aa).

S257 carries the post-translational modification FMN phosphoryl serine. The FAD site is built by A310, E329, N337, T338, G342, G343, and D576. R635 acts as the Proton donor in catalysis. Residues H742, E771, A786, and L787 each contribute to the FAD site.

This sequence belongs to the FAD-dependent oxidoreductase 2 family. FRD/SDH subfamily. NADH:(hydroxy)cinnamate reductase Crd is a heterodimer composed of CrdA and CrdB subunits, encoded by adjacent genes. It depends on FAD as a cofactor. The cofactor is FMN. In terms of processing, is flavinylated on Ser-257 by ApbE, encoded in a neighboring gene. Covalent attachment of FMN is essential for catalytic activity.

It catalyses the reaction 3-phenylpropanoate + NAD(+) = (E)-cinnamate + NADH + H(+). The catalysed reaction is 3-(3,4-dihydroxyphenyl)propanoate + NAD(+) = (E)-caffeate + NADH + H(+). The enzyme catalyses phloretate + NAD(+) = (E)-4-coumarate + NADH + H(+). It carries out the reaction dihydroferulate + NAD(+) = (E)-ferulate + NADH + H(+). With respect to regulation, is inactivated by molecular oxygen, allowing regulation of Crd activity by medium oxygen level. Functionally, component of the NADH:(hydroxy)cinnamate reductase Crd that catalyzes the reduction of the double bond in cinnamate, p-coumarate, caffeate, and ferulate under anaerobic conditions with NADH or methyl viologen as the electron donor. Is moderately active against acrylate and practically inactive against urocanate, fumarate, methacrylate and crotonate. CrdB is the catalytic subunit that binds substrates. Is likely involved in protecting V.ruber from (hydroxy)cinnamate poisoning. The polypeptide is NADH:(hydroxy)cinnamate reductase subunit CrdB (Vibrio ruber (strain DSM 16370 / JCM 11486 / BCRC 17186 / CECT 7878 / LMG 23124 / VR1)).